Here is a 189-residue protein sequence, read N- to C-terminus: Interferon alpha-13 (189 aa).

The N-terminal stretch at 1 to 23 (MARPCAFLMVLVVLSYWSACSLG) is a signal peptide. 2 cysteine pairs are disulfide-bonded: C24-C122 and C52-C162. N-linked (GlcNAc...) asparagine glycans are attached at residues N94 and N101.

The protein belongs to the alpha/beta interferon family.

It localises to the secreted. In terms of biological role, exhibits antiviral activity against Theiler's virus, Mengo virus and vesicular stomatitis virus. Interferons alpha stimulate the production of two enzymes: a protein kinase and an oligoadenylate synthetase. This is Interferon alpha-13 (Ifna13) from Mus musculus (Mouse).